A 232-amino-acid chain; its full sequence is Protein shisa-3 (232 aa).

The signal sequence occupies residues 1–19; sequence MRLLGCFFLIFLTWGSARA. Topologically, residues 20-93 are lumenal; sequence QGEYCHGWLD…GVSAQPVYVP (74 aa). A helical transmembrane segment spans residues 94–114; sequence FLIVGSIFIAFIIVGSLVAVY. The Cytoplasmic segment spans residues 115–232; the sequence is CCTCLRPKQT…NKSCPDFRQS (118 aa). A disordered region spans residues 146–185; the sequence is TSGNLRTPSRQSSTATSSTSTGGSVRRLSSSRADPGYLVS. Low complexity predominate over residues 151 to 177; it reads RTPSRQSSTATSSTSTGGSVRRLSSSR.

The protein belongs to the shisa family. Interacts with fzd8 and fgfr1.

It localises to the endoplasmic reticulum membrane. Functionally, plays an essential role in the maturation of presomitic mesoderm cells by individual attenuation of both fgf and wnt signaling. Regulates head and somite developmen. Inhibits both wnt and fgf signaling through the regulation of protein maturation and cell surface transportation of their receptors within the endoplasmic reticulum. The protein is Protein shisa-3 (shisa3) of Xenopus laevis (African clawed frog).